A 269-amino-acid chain; its full sequence is 4-hydroxy-tetrahydrodipicolinate reductase (269 aa).

NAD(+) is bound by residues 11 to 16 (GASGRM) and Glu37. Arg38 serves as a coordination point for NADP(+). Residues 101-103 (GTT) and 125-128 (AGNM) contribute to the NAD(+) site. Residue His158 is the Proton donor/acceptor of the active site. (S)-2,3,4,5-tetrahydrodipicolinate is bound at residue His159. Lys162 (proton donor) is an active-site residue. (S)-2,3,4,5-tetrahydrodipicolinate is bound at residue 168–169 (GT).

It belongs to the DapB family.

It localises to the cytoplasm. The enzyme catalyses (S)-2,3,4,5-tetrahydrodipicolinate + NAD(+) + H2O = (2S,4S)-4-hydroxy-2,3,4,5-tetrahydrodipicolinate + NADH + H(+). The catalysed reaction is (S)-2,3,4,5-tetrahydrodipicolinate + NADP(+) + H2O = (2S,4S)-4-hydroxy-2,3,4,5-tetrahydrodipicolinate + NADPH + H(+). The protein operates within amino-acid biosynthesis; L-lysine biosynthesis via DAP pathway; (S)-tetrahydrodipicolinate from L-aspartate: step 4/4. Catalyzes the conversion of 4-hydroxy-tetrahydrodipicolinate (HTPA) to tetrahydrodipicolinate. In Ruegeria pomeroyi (strain ATCC 700808 / DSM 15171 / DSS-3) (Silicibacter pomeroyi), this protein is 4-hydroxy-tetrahydrodipicolinate reductase.